A 405-amino-acid chain; its full sequence is Opine dehydrogenase (405 aa).

This sequence belongs to the lysopine/nopaline/octopine/opine/vitopine dehydrogenases family.

The polypeptide is Opine dehydrogenase (Haliotis discus hannai (Japanese abalone)).